A 35-amino-acid chain; its full sequence is IMRDPRFDNIPLILETVNPDIWAEEIAWLKSQAEI.

Glutamate 15 lines the Zn(2+) pocket.

The protein belongs to the AP endonuclease 2 family. It depends on Zn(2+) as a cofactor.

The catalysed reaction is Endonucleolytic cleavage to 5'-phosphooligonucleotide end-products.. Endonuclease IV plays a role in DNA repair. It cleaves phosphodiester bonds at apurinic or apyrimidinic (AP) sites, generating a 3'-hydroxyl group and a 5'-terminal sugar phosphate. This chain is Probable endonuclease 4 (nfo), found in Yersinia enterocolitica.